Consider the following 57-residue polypeptide: Large ribosomal subunit protein bL32c (57 aa).

Belongs to the bacterial ribosomal protein bL32 family.

Its subcellular location is the plastid. It localises to the chloroplast. This is Large ribosomal subunit protein bL32c from Liriodendron tulipifera (Tuliptree).